The following is a 650-amino-acid chain: Chaperone protein HtpG (650 aa).

The tract at residues 1–344 (MSKHTHSFQA…SADLPLNVSR (344 aa)) is a; substrate-binding. Residues 345–582 (ELLQESRDVR…DGGMSTQLAR (238 aa)) form a b region. A c region spans residues 583 to 650 (LLKQAGQSAP…YVKRVNALLA (68 aa)).

Belongs to the heat shock protein 90 family. As to quaternary structure, homodimer.

It localises to the cytoplasm. In terms of biological role, molecular chaperone. Has ATPase activity. The sequence is that of Chaperone protein HtpG from Acidovorax sp. (strain JS42).